The chain runs to 154 residues: Interleukin-2 (154 aa).

Residues 1–20 (MYKMQLLSCIALTLALVANG) form the signal peptide. Residue threonine 23 is glycosylated (O-linked (GalNAc...) threonine). Cysteine 78 and cysteine 126 are joined by a disulfide.

This sequence belongs to the IL-2 family.

It localises to the secreted. Cytokine produced by activated CD4-positive helper T-cells and to a lesser extend activated CD8-positive T-cells and natural killer (NK) cells that plays pivotal roles in the immune response and tolerance. Binds to a receptor complex composed of either the high-affinity trimeric IL-2R (IL2RA/CD25, IL2RB/CD122 and IL2RG/CD132) or the low-affinity dimeric IL-2R (IL2RB and IL2RG). Interaction with the receptor leads to oligomerization and conformation changes in the IL-2R subunits resulting in downstream signaling starting with phosphorylation of JAK1 and JAK3. In turn, JAK1 and JAK3 phosphorylate the receptor to form a docking site leading to the phosphorylation of several substrates including STAT5. This process leads to activation of several pathways including STAT, phosphoinositide-3-kinase/PI3K and mitogen-activated protein kinase/MAPK pathways. Functions as a T-cell growth factor and can increase NK-cell cytolytic activity as well. Promotes strong proliferation of activated B-cells and subsequently immunoglobulin production. Plays a pivotal role in regulating the adaptive immune system by controlling the survival and proliferation of regulatory T-cells, which are required for the maintenance of immune tolerance. Moreover, participates in the differentiation and homeostasis of effector T-cell subsets, including Th1, Th2, Th17 as well as memory CD8-positive T-cells. The chain is Interleukin-2 (IL2) from Delphinapterus leucas (Beluga whale).